The sequence spans 891 residues: Alanine--tRNA ligase (891 aa).

4 residues coordinate Zn(2+): His564, His568, Cys677, and His681.

It belongs to the class-II aminoacyl-tRNA synthetase family. Requires Zn(2+) as cofactor.

Its subcellular location is the cytoplasm. It carries out the reaction tRNA(Ala) + L-alanine + ATP = L-alanyl-tRNA(Ala) + AMP + diphosphate. Catalyzes the attachment of alanine to tRNA(Ala) in a two-step reaction: alanine is first activated by ATP to form Ala-AMP and then transferred to the acceptor end of tRNA(Ala). Also edits incorrectly charged Ser-tRNA(Ala) and Gly-tRNA(Ala) via its editing domain. This chain is Alanine--tRNA ligase, found in Rhodopseudomonas palustris (strain BisA53).